The chain runs to 145 residues: D-aminoacyl-tRNA deacylase (145 aa).

The short motif at 137 to 138 is the Gly-cisPro motif, important for rejection of L-amino acids element; the sequence is GP.

This sequence belongs to the DTD family. In terms of assembly, homodimer.

The protein resides in the cytoplasm. The enzyme catalyses glycyl-tRNA(Ala) + H2O = tRNA(Ala) + glycine + H(+). It carries out the reaction a D-aminoacyl-tRNA + H2O = a tRNA + a D-alpha-amino acid + H(+). Its function is as follows. An aminoacyl-tRNA editing enzyme that deacylates mischarged D-aminoacyl-tRNAs. Also deacylates mischarged glycyl-tRNA(Ala), protecting cells against glycine mischarging by AlaRS. Acts via tRNA-based rather than protein-based catalysis; rejects L-amino acids rather than detecting D-amino acids in the active site. By recycling D-aminoacyl-tRNA to D-amino acids and free tRNA molecules, this enzyme counteracts the toxicity associated with the formation of D-aminoacyl-tRNA entities in vivo and helps enforce protein L-homochirality. This Dinoroseobacter shibae (strain DSM 16493 / NCIMB 14021 / DFL 12) protein is D-aminoacyl-tRNA deacylase.